Reading from the N-terminus, the 73-residue chain is DNA-directed RNA polymerase subunit omega (73 aa).

The protein belongs to the RNA polymerase subunit omega family. In terms of assembly, the RNAP catalytic core consists of 2 alpha, 1 beta, 1 beta' and 1 omega subunit. When a sigma factor is associated with the core the holoenzyme is formed, which can initiate transcription.

The enzyme catalyses RNA(n) + a ribonucleoside 5'-triphosphate = RNA(n+1) + diphosphate. In terms of biological role, promotes RNA polymerase assembly. Latches the N- and C-terminal regions of the beta' subunit thereby facilitating its interaction with the beta and alpha subunits. The polypeptide is DNA-directed RNA polymerase subunit omega (Maridesulfovibrio salexigens (strain ATCC 14822 / DSM 2638 / NCIMB 8403 / VKM B-1763) (Desulfovibrio salexigens)).